The sequence spans 160 residues: Transcription antitermination protein NusB (160 aa).

The protein belongs to the NusB family.

Functionally, involved in transcription antitermination. Required for transcription of ribosomal RNA (rRNA) genes. Binds specifically to the boxA antiterminator sequence of the ribosomal RNA (rrn) operons. The protein is Transcription antitermination protein NusB of Sinorhizobium fredii (strain NBRC 101917 / NGR234).